The primary structure comprises 228 residues: Cutinase CUT1 (228 aa).

An N-terminal signal peptide occupies residues 1–16; sequence MQFITVALTLIALASA. Cys49 and Cys127 are disulfide-bonded. Ser138 acts as the Nucleophile in catalysis. Cysteines 189 and 196 form a disulfide. A glycan (N-linked (GlcNAc...) asparagine) is linked at Asn190. Residue Asp193 is part of the active site. His206 acts as the Proton donor/acceptor in catalysis.

This sequence belongs to the cutinase family. The 2 disulfide bonds play a critical role in holding the catalytic residues in juxta-position; reduction of the disulfide bridges results in the complete inactivation of the enzyme.

It is found in the secreted. It catalyses the reaction cutin + H2O = cutin monomers.. Catalyzes the hydrolysis of complex carboxylic polyesters found in the cell wall of plants. Degrades cutin, a macromolecule that forms the structure of the plant cuticle. Required for efficient penetration of the host plant cuticle by the appressorium during the initial stage of fungal infection. This is Cutinase CUT1 from Pyricularia oryzae (strain 70-15 / ATCC MYA-4617 / FGSC 8958) (Rice blast fungus).